Consider the following 885-residue polypeptide: DNA mismatch repair protein MutS (885 aa).

Residue 626 to 633 (GPNMGGKS) coordinates ATP.

It belongs to the DNA mismatch repair MutS family.

Its function is as follows. This protein is involved in the repair of mismatches in DNA. It is possible that it carries out the mismatch recognition step. This protein has a weak ATPase activity. The protein is DNA mismatch repair protein MutS of Burkholderia ambifaria (strain MC40-6).